A 358-amino-acid polypeptide reads, in one-letter code: WD repeat-containing protein 53 (358 aa).

6 WD repeats span residues 1-38 (MAVK…AWGE), 43-80 (LGHT…VLDV), 85-123 (DSLD…ILDL), 127-166 (KVIR…LWSL), 173-225 (WITN…RIFR), and 232-270 (EQEL…LWDA). The segment at 273–311 (EVEKKQKSPTKRTHRKKPKRGTCTKQGGNTNASVTDEEE) is disordered. Positions 279 to 294 (KSPTKRTHRKKPKRGT) are enriched in basic residues. The span at 295-306 (CTKQGGNTNASV) shows a compositional bias: polar residues. One copy of the WD 7 repeat lies at 314–355 (NILPKLNIEHGEKVNWLLGTKIKGHQNILVADQTSCISVYPL).

This sequence belongs to the WD repeat WDR53 family.

This chain is WD repeat-containing protein 53 (WDR53), found in Homo sapiens (Human).